The following is a 430-amino-acid chain: Tol-Pal system protein TolB (430 aa).

The signal sequence occupies residues M1–A26.

This sequence belongs to the TolB family. As to quaternary structure, the Tol-Pal system is composed of five core proteins: the inner membrane proteins TolA, TolQ and TolR, the periplasmic protein TolB and the outer membrane protein Pal. They form a network linking the inner and outer membranes and the peptidoglycan layer.

It is found in the periplasm. Part of the Tol-Pal system, which plays a role in outer membrane invagination during cell division and is important for maintaining outer membrane integrity. The polypeptide is Tol-Pal system protein TolB (Paraburkholderia phytofirmans (strain DSM 17436 / LMG 22146 / PsJN) (Burkholderia phytofirmans)).